Consider the following 318-residue polypeptide: NADH-ubiquinone oxidoreductase chain 1 (318 aa).

8 helical membrane-spanning segments follow: residues 3–23 (LINV…LTLL), 69–89 (LMFT…WIPI), 100–120 (LGVL…LWSG), 135–155 (AVAQ…SIMM), 171–191 (HMWL…STLA), 223–243 (FFLA…ILFF), 253–273 (ELHT…FLWV), and 293–313 (FLPL…TFAG).

Belongs to the complex I subunit 1 family.

It is found in the mitochondrion inner membrane. The catalysed reaction is a ubiquinone + NADH + 5 H(+)(in) = a ubiquinol + NAD(+) + 4 H(+)(out). Its function is as follows. Core subunit of the mitochondrial membrane respiratory chain NADH dehydrogenase (Complex I) that is believed to belong to the minimal assembly required for catalysis. Complex I functions in the transfer of electrons from NADH to the respiratory chain. The immediate electron acceptor for the enzyme is believed to be ubiquinone. The polypeptide is NADH-ubiquinone oxidoreductase chain 1 (MT-ND1) (Dasypus novemcinctus (Nine-banded armadillo)).